A 652-amino-acid polypeptide reads, in one-letter code: Adhesion G protein-coupled receptor E3 (652 aa).

The signal sequence occupies residues 1 to 21 (MQGPLLLPGLCFLLSLFGAVT). At 22–357 (QKTKTSCAKC…TSQEEDPVLT (336 aa)) the chain is on the extracellular side. One can recognise an EGF-like 1 domain in the interval 24–66 (TKTSCAKCPPNASCVNNTHCTCNHGYTSGSGQKLFTFPLETCN). 6 disulfides stabilise this stretch: C28/C37, C31/C43, C45/C65, C71/C85, C79/C94, and C96/C117. N-linked (GlcNAc...) asparagine glycosylation is found at N34 and N39. The EGF-like 2; calcium-binding domain maps to 67-118 (DINECTPPYSVYCGFNAVCYNVEGSFYCQCVPGYRLHSGNEQFSNSNENTCQ). Residues N145, N189, N202, N250, N279, N327, and N334 are each glycosylated (N-linked (GlcNAc...) asparagine). In terms of domain architecture, GAIN-B spans 183-351 (KVLKIQNDSV…AVLMALTSQE (169 aa)). 2 disulfide bridges follow: C304/C333 and C321/C335. The GPS stretch occupies residues 304–351 (CVYWKSTGQGSQWSRDGCFLIHVNKSHTMCNCSHLSSFAVLMALTSQE). Residues 358–378 (VITYVGLSVSLLCLLLAALTF) form a helical membrane-spanning segment. The Cytoplasmic segment spans residues 379–389 (LLCKAIRNTST). Residues 390 to 410 (SLHLQLSLCLFLAHLLFLVGI) traverse the membrane as a helical segment. The Extracellular segment spans residues 411-416 (DRTEPK). Residues 417–437 (VLCSIIAGALHYLYLAAFTWM) traverse the membrane as a helical segment. Residues 438 to 464 (LLEGVHLFLTARNLTVVNYSSINRLMK) lie on the Cytoplasmic side of the membrane. Residues 465-485 (WIMFPVGYGVPAVTVAISAAS) form a helical membrane-spanning segment. The Extracellular segment spans residues 486 to 508 (WPHLYGTADRCWLHLDQGFMWSF). A helical transmembrane segment spans residues 509–529 (LGPVCAIFSANLVLFILVFWI). Over 530–557 (LKRKLSSLNSEVSTIQNTRMLAFKATAQ) the chain is Cytoplasmic. The chain crosses the membrane as a helical span at residues 558–578 (LFILGCTWCLGLLQVGPAAQV). Topologically, residues 579 to 580 (MA) are extracellular. Residues 581-601 (YLFTIINSLQGFFIFLVYCLL) traverse the membrane as a helical segment. Topologically, residues 602–652 (SQQVQKQYQKWFREIVKSKSESETYTLSSKMGPDSKPSEGDVFPGQVKRKY) are cytoplasmic. The tract at residues 621-652 (SESETYTLSSKMGPDSKPSEGDVFPGQVKRKY) is disordered.

This sequence belongs to the G-protein coupled receptor 2 family. Adhesion G-protein coupled receptor (ADGR) subfamily. As to quaternary structure, forms a heterodimer, consisting of a large extracellular region (alpha subunit) non-covalently linked to a seven-transmembrane moiety (beta subunit). In terms of processing, proteolytically cleaved into 2 subunits, an extracellular alpha subunit and a seven-transmembrane subunit. Displays a predominantly leukocyte-restricted expression, with highest levels in neutrophils, monocytes and macrophages.

The protein localises to the cell membrane. Its subcellular location is the secreted. Functionally, orphan receptor that may play a role myeloid-myeloid interactions during immune and inflammatory responses. A ligand for the soluble form of this receptor is present at the surface of monocytes-derived macrophages and activated neutrophils. The protein is Adhesion G protein-coupled receptor E3 of Homo sapiens (Human).